Here is a 161-residue protein sequence, read N- to C-terminus: Nucleotide-binding protein Bd0338 (161 aa).

It belongs to the YajQ family.

Nucleotide-binding protein. The chain is Nucleotide-binding protein Bd0338 from Bdellovibrio bacteriovorus (strain ATCC 15356 / DSM 50701 / NCIMB 9529 / HD100).